Consider the following 235-residue polypeptide: Sugar fermentation stimulation protein homolog (235 aa).

This sequence belongs to the SfsA family.

The polypeptide is Sugar fermentation stimulation protein homolog (Aliivibrio fischeri (strain ATCC 700601 / ES114) (Vibrio fischeri)).